The primary structure comprises 329 residues: Malate dehydrogenase (329 aa).

Gly-12–Gly-18 contacts NAD(+). Positions 95 and 101 each coordinate substrate. NAD(+)-binding positions include Asn-108, Gln-115, and Val-132–Asn-134. The substrate site is built by Asn-134 and Arg-165. The active-site Proton acceptor is the His-190.

Belongs to the LDH/MDH superfamily. MDH type 2 family.

The enzyme catalyses (S)-malate + NAD(+) = oxaloacetate + NADH + H(+). In terms of biological role, catalyzes the reversible oxidation of malate to oxaloacetate. The protein is Malate dehydrogenase of Polynucleobacter asymbioticus (strain DSM 18221 / CIP 109841 / QLW-P1DMWA-1) (Polynucleobacter necessarius subsp. asymbioticus).